We begin with the raw amino-acid sequence, 358 residues long: Membrane-bound lytic murein transglycosylase C (358 aa).

Residues 1 to 19 form the signal peptide; it reads MKITLKKLLILAIVPFLYA. Cysteine 20 carries the N-palmitoyl cysteine lipid modification. Cysteine 20 carries S-diacylglycerol cysteine lipidation.

Belongs to the transglycosylase Slt family.

Its subcellular location is the cell outer membrane. The catalysed reaction is Exolytic cleavage of the (1-&gt;4)-beta-glycosidic linkage between N-acetylmuramic acid (MurNAc) and N-acetylglucosamine (GlcNAc) residues in peptidoglycan, from either the reducing or the non-reducing ends of the peptidoglycan chains, with concomitant formation of a 1,6-anhydrobond in the MurNAc residue.. Functionally, murein-degrading enzyme. May play a role in recycling of muropeptides during cell elongation and/or cell division. The protein is Membrane-bound lytic murein transglycosylase C of Actinobacillus succinogenes (strain ATCC 55618 / DSM 22257 / CCUG 43843 / 130Z).